The sequence spans 154 residues: CS6 fimbrial subunit A (154 aa).

Positions 1–18 (MKKTIGLILILASFGSHA) are cleaved as a signal peptide.

It localises to the fimbrium. Its function is as follows. Fimbriae (also called pili), polar filaments radiating from the surface of the bacterium to a length of 0.5-1.5 micrometers and numbering 100-300 per cell, enable bacteria to colonize the epithelium of specific host organs. The protein is CS6 fimbrial subunit A (cssA) of Escherichia coli.